The primary structure comprises 458 residues: Argininosuccinate lyase (458 aa).

Belongs to the lyase 1 family. Argininosuccinate lyase subfamily.

It is found in the cytoplasm. The catalysed reaction is 2-(N(omega)-L-arginino)succinate = fumarate + L-arginine. Its pathway is amino-acid biosynthesis; L-arginine biosynthesis; L-arginine from L-ornithine and carbamoyl phosphate: step 3/3. The polypeptide is Argininosuccinate lyase (Salmonella typhimurium (strain LT2 / SGSC1412 / ATCC 700720)).